The following is a 300-amino-acid chain: Nicotinate-nucleotide pyrophosphorylase [carboxylating] (300 aa).

The segment at 5–9 is important for hexamer formation; sequence QLLPK. Quinolinate is bound by residues R107, 150–151, 172–173, K183, E213, D234, 260–262, and G282; these read RK, HR, and SGG.

The protein belongs to the NadC/ModD family. Hexamer formed by 3 homodimers.

The catalysed reaction is nicotinate beta-D-ribonucleotide + CO2 + diphosphate = quinolinate + 5-phospho-alpha-D-ribose 1-diphosphate + 2 H(+). It functions in the pathway cofactor biosynthesis; NAD(+) biosynthesis; nicotinate D-ribonucleotide from quinolinate: step 1/1. In terms of biological role, involved in the catabolism of quinolinic acid (QA). This Dictyostelium discoideum (Social amoeba) protein is Nicotinate-nucleotide pyrophosphorylase [carboxylating] (qprt).